The sequence spans 270 residues: Putative phosphoenolpyruvate synthase regulatory protein (270 aa).

150–157 (GVSRCGKT) provides a ligand contact to ADP.

The protein belongs to the pyruvate, phosphate/water dikinase regulatory protein family. PSRP subfamily.

It catalyses the reaction [pyruvate, water dikinase] + ADP = [pyruvate, water dikinase]-phosphate + AMP + H(+). The enzyme catalyses [pyruvate, water dikinase]-phosphate + phosphate + H(+) = [pyruvate, water dikinase] + diphosphate. Functionally, bifunctional serine/threonine kinase and phosphorylase involved in the regulation of the phosphoenolpyruvate synthase (PEPS) by catalyzing its phosphorylation/dephosphorylation. The chain is Putative phosphoenolpyruvate synthase regulatory protein from Shewanella oneidensis (strain ATCC 700550 / JCM 31522 / CIP 106686 / LMG 19005 / NCIMB 14063 / MR-1).